A 366-amino-acid polypeptide reads, in one-letter code: tRNA/tmRNA (uracil-C(5))-methyltransferase (366 aa).

The S-adenosyl-L-methionine site is built by Gln-190, Tyr-218, Asn-223, Glu-239, and Asp-299. Cys-324 (nucleophile) is an active-site residue. The active-site Proton acceptor is the Glu-358.

Belongs to the class I-like SAM-binding methyltransferase superfamily. RNA M5U methyltransferase family. TrmA subfamily.

The enzyme catalyses uridine(54) in tRNA + S-adenosyl-L-methionine = 5-methyluridine(54) in tRNA + S-adenosyl-L-homocysteine + H(+). It carries out the reaction uridine(341) in tmRNA + S-adenosyl-L-methionine = 5-methyluridine(341) in tmRNA + S-adenosyl-L-homocysteine + H(+). In terms of biological role, dual-specificity methyltransferase that catalyzes the formation of 5-methyluridine at position 54 (m5U54) in all tRNAs, and that of position 341 (m5U341) in tmRNA (transfer-mRNA). The sequence is that of tRNA/tmRNA (uracil-C(5))-methyltransferase from Shigella boydii serotype 18 (strain CDC 3083-94 / BS512).